A 461-amino-acid chain; its full sequence is MSGKSIFDKLWDRHVITGKEGEPQLMYVDQHYIHEVTSPQAFQGLRDAGRKVRRPDLTFGTFDHNVPTVNIYDIRDVISKAQMDALARNVIEFNIPHADHGSENQGIVHMVGPETGRTQPGKFIVCGDSHTATHGAFGAIGFGIGTTEVEHVFATQTIWQVKPKKLLVKFTGKPQKGVYSKDYILALIAKYGVALGVGYVVEYIGDAVDALSMEERMTICNMSIEFGSKMGIMNPDQKTFDYLKNKACVPEDFETAVADWKTLVSDEDAHYDKVIELDVSQLAPMVTWGTNPSMGVAFGQAFPDIRDMNDKRAYDYMDMKPGQTAEDIELGYVFLGSCTNARLSDLKVAAKYVAGKHIAPNLTAIVVPGSRPVKQAAEKIGLDKIFLDAGFEWRDPGCSMCLGMNPDKVPEGMHCASTSNRNFEDRQGVGAKTHLCSPAMAAAAAIAGRFIDVRQLPEAQV.

Cysteine 338, cysteine 398, and cysteine 401 together coordinate [4Fe-4S] cluster.

Belongs to the aconitase/IPM isomerase family. LeuC type 1 subfamily. As to quaternary structure, heterodimer of LeuC and LeuD. The cofactor is [4Fe-4S] cluster.

It catalyses the reaction (2R,3S)-3-isopropylmalate = (2S)-2-isopropylmalate. Its pathway is amino-acid biosynthesis; L-leucine biosynthesis; L-leucine from 3-methyl-2-oxobutanoate: step 2/4. Functionally, catalyzes the isomerization between 2-isopropylmalate and 3-isopropylmalate, via the formation of 2-isopropylmaleate. The protein is 3-isopropylmalate dehydratase large subunit of Streptococcus mutans serotype c (strain ATCC 700610 / UA159).